A 417-amino-acid polypeptide reads, in one-letter code: MAEIRNYTLNFGPQHPAAHGVLRLILEIDGEVIERADPHIGLLHRGTEKLVESKPYNQSIGYMDRLDYVSMMCNEHAYIMAIETMLGIKVPERAQYIRVMFDEITRILNHLMWLGTHGLDVGAMSIFLYAFREREKLIDCYEAVSGSRMHATYYRPGGVYRDLPDKMPQYLASGFRTDKELKTMNENRQGSLLDFIADFVKEFPKSIKQYDDLLTDNRIWKQRLVNIGIVSANRAKQLGFTGPMLRGSGVAWDLRKNQPYAVYDQLEFDIPVGVTGDSYDRYLVRMEEMRQSNHIIKQCVKWLQGNPGAVMSDDHKVSPPKRTDMKGDMESLIHHFKLFTEGYCLSEGEIYRAVEHPKGEFGIYLISDGANKPYRVKIRAPGFAHLAAMNEMARGHMLSDVVTIIGTQDIVFGEIDR.

Belongs to the complex I 49 kDa subunit family. NDH-1 is composed of 14 different subunits. Subunits NuoB, C, D, E, F, and G constitute the peripheral sector of the complex.

The protein localises to the cell inner membrane. The enzyme catalyses a quinone + NADH + 5 H(+)(in) = a quinol + NAD(+) + 4 H(+)(out). Its function is as follows. NDH-1 shuttles electrons from NADH, via FMN and iron-sulfur (Fe-S) centers, to quinones in the respiratory chain. The immediate electron acceptor for the enzyme in this species is believed to be ubiquinone. Couples the redox reaction to proton translocation (for every two electrons transferred, four hydrogen ions are translocated across the cytoplasmic membrane), and thus conserves the redox energy in a proton gradient. This chain is NADH-quinone oxidoreductase subunit D, found in Ruthia magnifica subsp. Calyptogena magnifica.